Reading from the N-terminus, the 125-residue chain is uncharacterized protein (125 aa).

Residues 1 to 63 (MSQSIEDYLE…YEPYIGITLT (63 aa)) form the HTH dtxR-type domain.

It belongs to the DtxR/MntR family.

This is an uncharacterized protein from Methanocaldococcus jannaschii (strain ATCC 43067 / DSM 2661 / JAL-1 / JCM 10045 / NBRC 100440) (Methanococcus jannaschii).